Consider the following 186-residue polypeptide: Elongation factor P (186 aa).

The protein belongs to the elongation factor P family.

The protein localises to the cytoplasm. It participates in protein biosynthesis; polypeptide chain elongation. Involved in peptide bond synthesis. Stimulates efficient translation and peptide-bond synthesis on native or reconstituted 70S ribosomes in vitro. Probably functions indirectly by altering the affinity of the ribosome for aminoacyl-tRNA, thus increasing their reactivity as acceptors for peptidyl transferase. In Brucella canis (strain ATCC 23365 / NCTC 10854 / RM-666), this protein is Elongation factor P.